Consider the following 645-residue polypeptide: Rho GTPase-activating protein 25 (645 aa).

In terms of domain architecture, PH spans 46 to 151 (RPIKMGWLKK…WVKFLRRVAG (106 aa)). A Rho-GAP domain is found at 159 to 353 (QRLDETVAYE…MMIRDHEVLF (195 aa)). 2 disordered regions span residues 355 to 444 (KSKD…QTLP) and 469 to 550 (FWSP…EEEI). Residues Ser362 and Ser395 each carry the phosphoserine modification. Residues 393-409 (TDSFSSMTSDSDTTSPT) are compositionally biased toward low complexity. Thr406 is subject to Phosphothreonine. Residues 420 to 431 (DSSKVPREKPGD) are compositionally biased toward basic and acidic residues. Residues 487 to 504 (SQDLRQLSDSQRTSTYDN) show a composition bias toward polar residues. Ser536 carries the post-translational modification Phosphoserine. Positions 541 to 644 (GKKNSGEEEI…VKSMKEPKTE (104 aa)) form a coiled coil.

GTPase activator for the Rho-type GTPases by converting them to an inactive GDP-bound state. The polypeptide is Rho GTPase-activating protein 25 (ARHGAP25) (Homo sapiens (Human)).